We begin with the raw amino-acid sequence, 411 residues long: Adenylosuccinate synthetase (411 aa).

GTP-binding positions include 11–17 (GDEGKGK) and 39–41 (GHT). Aspartate 12 acts as the Proton acceptor in catalysis. Positions 12 and 39 each coordinate Mg(2+). IMP contacts are provided by residues 12-15 (DEGK), 37-40 (NAGH), threonine 121, arginine 135, glutamine 215, threonine 230, and arginine 294. Histidine 40 (proton donor) is an active-site residue. 290-296 (TTTKRPR) contacts substrate. GTP-binding positions include arginine 296, 322–324 (KLD), and 400–402 (STS).

Belongs to the adenylosuccinate synthetase family. Homodimer. The cofactor is Mg(2+).

The protein resides in the cytoplasm. It catalyses the reaction IMP + L-aspartate + GTP = N(6)-(1,2-dicarboxyethyl)-AMP + GDP + phosphate + 2 H(+). The protein operates within purine metabolism; AMP biosynthesis via de novo pathway; AMP from IMP: step 1/2. Plays an important role in the de novo pathway of purine nucleotide biosynthesis. Catalyzes the first committed step in the biosynthesis of AMP from IMP. This is Adenylosuccinate synthetase from Helicobacter pylori (strain HPAG1).